Consider the following 367-residue polypeptide: Peptide chain release factor 1 (367 aa).

Residue Gln238 is modified to N5-methylglutamine.

The protein belongs to the prokaryotic/mitochondrial release factor family. In terms of processing, methylated by PrmC. Methylation increases the termination efficiency of RF1.

It is found in the cytoplasm. In terms of biological role, peptide chain release factor 1 directs the termination of translation in response to the peptide chain termination codons UAG and UAA. The polypeptide is Peptide chain release factor 1 (Dictyoglomus thermophilum (strain ATCC 35947 / DSM 3960 / H-6-12)).